Here is an 88-residue protein sequence, read N- to C-terminus: Small ribosomal subunit protein uS17 (88 aa).

This sequence belongs to the universal ribosomal protein uS17 family. In terms of assembly, part of the 30S ribosomal subunit.

Functionally, one of the primary rRNA binding proteins, it binds specifically to the 5'-end of 16S ribosomal RNA. This chain is Small ribosomal subunit protein uS17, found in Helicobacter hepaticus (strain ATCC 51449 / 3B1).